Consider the following 156-residue polypeptide: Small ribosomal subunit protein uS7 (156 aa).

This sequence belongs to the universal ribosomal protein uS7 family. Part of the 30S ribosomal subunit. Contacts proteins S9 and S11.

Functionally, one of the primary rRNA binding proteins, it binds directly to 16S rRNA where it nucleates assembly of the head domain of the 30S subunit. Is located at the subunit interface close to the decoding center, probably blocks exit of the E-site tRNA. The protein is Small ribosomal subunit protein uS7 of Streptococcus pyogenes serotype M3 (strain ATCC BAA-595 / MGAS315).